The primary structure comprises 264 residues: 2-dehydro-3-deoxy-D-gluconate 5-dehydrogenase (264 aa).

14–38 (LVTGSTHGLGMAMAKGLGLAGATIV) is an NAD(+) binding site. S147 is a substrate binding site. Y160 (proton acceptor) is an active-site residue.

It belongs to the short-chain dehydrogenases/reductases (SDR) family. Homotetramer.

It is found in the cytoplasm. It carries out the reaction 2-dehydro-3-deoxy-D-gluconate + NAD(+) = 3-deoxy-D-glycero-2,5-hexodiulosonate + NADH + H(+). 2-dehydro-3-deoxy-D-gluconate 5-dehydrogenase involved in ulvan degradation. Ulvan is the main polysaccharide component of the Ulvales (green seaweed) cell wall. It is composed of disaccharide building blocks comprising 3-sulfated rhamnose (Rha3S) linked to D-glucuronic acid (GlcA), L-iduronic acid (IduA), or D-xylose (Xyl). Catalyzes the reversible reduction of 2,5-diketo-3-deoxygluconate (DKII or 4,6-dihydroxy-2,5-dioxohexanoate) into 2-keto-3-deoxygluconate (KDG or 2-dehydro-3-deoxygluconate) with a concomitant oxidation of NADH. This is 2-dehydro-3-deoxy-D-gluconate 5-dehydrogenase (kduD) from Formosa agariphila (strain DSM 15362 / KCTC 12365 / LMG 23005 / KMM 3901 / M-2Alg 35-1).